The chain runs to 337 residues: Glyceraldehyde-3-phosphate dehydrogenase 1, cytosolic (337 aa).

NAD(+) contacts are provided by residues 13 to 14 (RI), Asp35, and Arg82. Residues 153–155 (SCT), Thr184, 213–214 (TG), and Arg236 contribute to the D-glyceraldehyde 3-phosphate site. Catalysis depends on Cys154, which acts as the Nucleophile. Residue Asn318 coordinates NAD(+).

It belongs to the glyceraldehyde-3-phosphate dehydrogenase family. In terms of assembly, homotetramer.

The protein resides in the cytoplasm. The catalysed reaction is D-glyceraldehyde 3-phosphate + phosphate + NAD(+) = (2R)-3-phospho-glyceroyl phosphate + NADH + H(+). The protein operates within carbohydrate degradation; glycolysis; pyruvate from D-glyceraldehyde 3-phosphate: step 1/5. Its function is as follows. Key enzyme in glycolysis that catalyzes the first step of the pathway by converting D-glyceraldehyde 3-phosphate (G3P) into 3-phospho-D-glyceroyl phosphate. Essential for the maintenance of cellular ATP levels and carbohydrate metabolism. In Hordeum vulgare (Barley), this protein is Glyceraldehyde-3-phosphate dehydrogenase 1, cytosolic (GAPC).